Reading from the N-terminus, the 375-residue chain is Alcohol dehydrogenase 1A (375 aa).

N-acetylserine is present on Ser-2. Ser-23 bears the Phosphoserine mark. A Zn(2+)-binding site is contributed by Cys-47. 48-52 lines the NAD(+) pocket; it reads GTDDH. Residues His-68, Cys-98, Cys-101, Cys-104, Cys-112, and Cys-175 each contribute to the Zn(2+) site. NAD(+)-binding positions include 200 to 205, Asp-224, Lys-229, Ile-270, 293 to 295, 318 to 320, and Arg-370; these read GLGGVG, VGV, and AVL.

Belongs to the zinc-containing alcohol dehydrogenase family. Dimer of identical or heterodimer of closely related subunits alpha, beta, or gamma that are encoded by genes ADH1A, ADH1B, and ADH1C, respectively. Zn(2+) serves as cofactor.

The protein resides in the cytoplasm. The enzyme catalyses a primary alcohol + NAD(+) = an aldehyde + NADH + H(+). The catalysed reaction is a secondary alcohol + NAD(+) = a ketone + NADH + H(+). It carries out the reaction butan-1-ol + NAD(+) = butanal + NADH + H(+). It catalyses the reaction 1-propanol + NAD(+) = propanal + NADH + H(+). Its function is as follows. Alcohol dehydrogenase. Oxidizes primary as well as secondary alcohols. Ethanol is a very poor substrate. The polypeptide is Alcohol dehydrogenase 1A (ADH1A) (Pongo abelii (Sumatran orangutan)).